The following is a 65-amino-acid chain: Large ribosomal subunit protein bL35 (65 aa).

The tract at residues 1 to 25 (MPKLKTKSSAAKRFKKTGKGGFKHR) is disordered.

It belongs to the bacterial ribosomal protein bL35 family.

In Francisella tularensis subsp. holarctica (strain FTNF002-00 / FTA), this protein is Large ribosomal subunit protein bL35.